The sequence spans 574 residues: Glycine--tRNA ligase (574 aa).

Arginine 96 and glutamate 162 together coordinate substrate. ATP is bound by residues arginine 194–glutamate 196, isoleucine 204–phenylalanine 209, glutamate 327–cysteine 328, and glycine 450–arginine 453. Phenylalanine 209 to glutamate 213 serves as a coordination point for substrate. Glutamate 446–glycine 450 is a substrate binding site.

Belongs to the class-II aminoacyl-tRNA synthetase family.

Its subcellular location is the cytoplasm. It catalyses the reaction tRNA(Gly) + glycine + ATP = glycyl-tRNA(Gly) + AMP + diphosphate. Its function is as follows. Catalyzes the attachment of glycine to tRNA(Gly). This Methanococcus vannielii (strain ATCC 35089 / DSM 1224 / JCM 13029 / OCM 148 / SB) protein is Glycine--tRNA ligase.